The chain runs to 534 residues: Multicopper oxidase LPR1 homolog 3 (534 aa).

Cu cation contacts are provided by histidine 84 and histidine 86. Asparagine 109 carries an N-linked (GlcNAc...) asparagine glycan. Residues histidine 133 and histidine 135 each coordinate Cu cation. Positions 219–291 constitute a Plastocyanin-like domain; sequence PFQAVQRRRY…VDFSLVVNPN (73 aa). Asparagine 234, asparagine 291, asparagine 312, asparagine 323, asparagine 341, and asparagine 372 each carry an N-linked (GlcNAc...) asparagine glycan. Residues histidine 419, histidine 422, and histidine 424 each contribute to the Cu cation site. The N-linked (GlcNAc...) asparagine glycan is linked to asparagine 450. Residues histidine 515, cysteine 516, histidine 517, histidine 521, and methionine 526 each contribute to the Cu cation site.

This sequence belongs to the multicopper oxidase family. Cu cation serves as cofactor. Expressed in roots and basal stems.

The protein resides in the endoplasmic reticulum membrane. In terms of biological role, multicopper oxidase that may play a role in the maintenance of inorganic phosphate homeostasis. The sequence is that of Multicopper oxidase LPR1 homolog 3 from Oryza sativa subsp. japonica (Rice).